The sequence spans 207 residues: Thiamine-phosphate synthase (207 aa).

Residues 38–42 and N70 contribute to the 4-amino-2-methyl-5-(diphosphooxymethyl)pyrimidine site; that span reads QYRNK. Mg(2+) contacts are provided by D71 and D90. Residue S109 coordinates 4-amino-2-methyl-5-(diphosphooxymethyl)pyrimidine. 2-[(2R,5Z)-2-carboxy-4-methylthiazol-5(2H)-ylidene]ethyl phosphate is bound at residue 136 to 138; the sequence is TAT. K139 is a 4-amino-2-methyl-5-(diphosphooxymethyl)pyrimidine binding site. 2-[(2R,5Z)-2-carboxy-4-methylthiazol-5(2H)-ylidene]ethyl phosphate is bound by residues G165 and 185–186; that span reads VS.

This sequence belongs to the thiamine-phosphate synthase family. Requires Mg(2+) as cofactor.

It carries out the reaction 2-[(2R,5Z)-2-carboxy-4-methylthiazol-5(2H)-ylidene]ethyl phosphate + 4-amino-2-methyl-5-(diphosphooxymethyl)pyrimidine + 2 H(+) = thiamine phosphate + CO2 + diphosphate. The enzyme catalyses 2-(2-carboxy-4-methylthiazol-5-yl)ethyl phosphate + 4-amino-2-methyl-5-(diphosphooxymethyl)pyrimidine + 2 H(+) = thiamine phosphate + CO2 + diphosphate. The catalysed reaction is 4-methyl-5-(2-phosphooxyethyl)-thiazole + 4-amino-2-methyl-5-(diphosphooxymethyl)pyrimidine + H(+) = thiamine phosphate + diphosphate. Its pathway is cofactor biosynthesis; thiamine diphosphate biosynthesis; thiamine phosphate from 4-amino-2-methyl-5-diphosphomethylpyrimidine and 4-methyl-5-(2-phosphoethyl)-thiazole: step 1/1. Functionally, condenses 4-methyl-5-(beta-hydroxyethyl)thiazole monophosphate (THZ-P) and 2-methyl-4-amino-5-hydroxymethyl pyrimidine pyrophosphate (HMP-PP) to form thiamine monophosphate (TMP). The protein is Thiamine-phosphate synthase of Xanthomonas campestris pv. campestris (strain 8004).